Reading from the N-terminus, the 124-residue chain is Small ribosomal subunit protein uS12 (124 aa).

Residue Asp89 is modified to 3-methylthioaspartic acid.

It belongs to the universal ribosomal protein uS12 family. In terms of assembly, part of the 30S ribosomal subunit. Contacts proteins S8 and S17. May interact with IF1 in the 30S initiation complex.

In terms of biological role, with S4 and S5 plays an important role in translational accuracy. Functionally, interacts with and stabilizes bases of the 16S rRNA that are involved in tRNA selection in the A site and with the mRNA backbone. Located at the interface of the 30S and 50S subunits, it traverses the body of the 30S subunit contacting proteins on the other side and probably holding the rRNA structure together. The combined cluster of proteins S8, S12 and S17 appears to hold together the shoulder and platform of the 30S subunit. The polypeptide is Small ribosomal subunit protein uS12 (Serratia proteamaculans (strain 568)).